The primary structure comprises 400 residues: 3-hydroxybenzoate 6-hydroxylase (400 aa).

Belongs to the 3-hydroxybenzoate 6-hydroxylase family. As to quaternary structure, monomer. FAD serves as cofactor.

The enzyme catalyses 3-hydroxybenzoate + NADH + O2 + H(+) = 2,5-dihydroxybenzoate + NAD(+) + H2O. Its function is as follows. Catalyzes the NAD- or NADP-dependent conversion of 3-hydroxybenzoate to gentisate. The affinity of the enzyme toward NAD is twice as high as for NADP. This Polaromonas naphthalenivorans (strain CJ2) protein is 3-hydroxybenzoate 6-hydroxylase (nagX).